Reading from the N-terminus, the 546-residue chain is Chaperonin GroEL (546 aa).

ATP contacts are provided by residues 30–33, Lys-51, 87–91, Gly-415, 478–480, and Asp-494; these read TMGP, DGTTT, and NAA.

This sequence belongs to the chaperonin (HSP60) family. As to quaternary structure, forms a cylinder of 14 subunits composed of two heptameric rings stacked back-to-back. Interacts with the co-chaperonin GroES.

Its subcellular location is the cytoplasm. It catalyses the reaction ATP + H2O + a folded polypeptide = ADP + phosphate + an unfolded polypeptide.. Functionally, together with its co-chaperonin GroES, plays an essential role in assisting protein folding. The GroEL-GroES system forms a nano-cage that allows encapsulation of the non-native substrate proteins and provides a physical environment optimized to promote and accelerate protein folding. This chain is Chaperonin GroEL, found in Wolinella succinogenes (strain ATCC 29543 / DSM 1740 / CCUG 13145 / JCM 31913 / LMG 7466 / NCTC 11488 / FDC 602W) (Vibrio succinogenes).